The following is a 400-amino-acid chain: Elongation factor Tu (400 aa).

A tr-type G domain is found at 10-209 (KPHINIGTIG…AVDDYIPTPE (200 aa)). Residues 19 to 26 (GHVDHGKT) form a G1 region. 19–26 (GHVDHGKT) serves as a coordination point for GTP. Mg(2+) is bound at residue Thr-26. A G2 region spans residues 60–64 (GITIS). Positions 81–84 (DCPG) are G3. GTP-binding positions include 81-85 (DCPGH) and 136-139 (NKVD). The interval 136 to 139 (NKVD) is G4. The G5 stretch occupies residues 174–176 (SAK).

Belongs to the TRAFAC class translation factor GTPase superfamily. Classic translation factor GTPase family. EF-Tu/EF-1A subfamily. In terms of assembly, monomer.

Its subcellular location is the cytoplasm. The catalysed reaction is GTP + H2O = GDP + phosphate + H(+). Its function is as follows. GTP hydrolase that promotes the GTP-dependent binding of aminoacyl-tRNA to the A-site of ribosomes during protein biosynthesis. The chain is Elongation factor Tu from Herpetosiphon aurantiacus (Herpetosiphon giganteus).